Consider the following 118-residue polypeptide: Large ribosomal subunit protein uL18 (118 aa).

Belongs to the universal ribosomal protein uL18 family. Part of the 50S ribosomal subunit; part of the 5S rRNA/L5/L18/L25 subcomplex. Contacts the 5S and 23S rRNAs.

Its function is as follows. This is one of the proteins that bind and probably mediate the attachment of the 5S RNA into the large ribosomal subunit, where it forms part of the central protuberance. In Campylobacter jejuni subsp. doylei (strain ATCC BAA-1458 / RM4099 / 269.97), this protein is Large ribosomal subunit protein uL18.